The following is a 185-amino-acid chain: Ribosome-recycling factor (185 aa).

The tract at residues 127-158 is disordered; sequence AVRNTRQDANNKVKKLEKDKEISEDESKKAQE.

Belongs to the RRF family.

It localises to the cytoplasm. Functionally, responsible for the release of ribosomes from messenger RNA at the termination of protein biosynthesis. May increase the efficiency of translation by recycling ribosomes from one round of translation to another. This is Ribosome-recycling factor from Helicobacter pylori (strain G27).